The primary structure comprises 569 residues: Aspartic proteinase 3 (569 aa).

The signal sequence occupies residues 1-21 (MKLKTVRSAVLSSLFASQVLG). Positions 22–67 (KIIPAANKRDDDSNSKFVKLPFHKLYGDSLENVGSDKKPEVRLLKR) are excised as a propeptide. Positions 83 to 475 (YSVDLEVGTP…DLENLEISMA (393 aa)) constitute a Peptidase A1 domain. N-linked (GlcNAc...) asparagine glycosylation is present at N95. D101 is a catalytic residue. N-linked (GlcNAc...) asparagine glycans are attached at residues N203, N232, N242, N245, N299, and N358. D371 is a catalytic residue. N-linked (GlcNAc...) asparagine glycans are attached at residues N480, N522, and N532. The GPI-anchor amidated asparagine moiety is linked to residue N548. Positions 549–569 (VGDHIVPSLPLTLISLLFAFI) are cleaved as a propeptide — removed in mature form.

The protein belongs to the peptidase A1 family. In terms of assembly, consists of an alpha and a beta subunit, which are maintained together by a disulfide bond. In terms of processing, the zymogen is transported to the periplasm, where the propeptide is removed and the enzyme is further subjected to an internal, autocatalytic cleavage to generate an alpha/beta two-subunit endopeptidase. The proteolytic processing at the cell surface is regulated by the environmental pH. Extensively N-glycosylated.

Its subcellular location is the cell membrane. It carries out the reaction Hydrolyzes various precursor proteins with Arg or Lys in P1, and commonly Arg or Lys also in P2. The P3 amino acid is usually non-polar, but otherwise additional basic amino acids are favorable in both non-prime and prime positions.. Cleaves proteins C-terminally to mono- and paired-basic residues. Involved in the shedding of a subset of GPI-anchored plasma membrane proteins from the cell surface, including itself, GAS1 and MSB2. May also play a role in the maturation of GPI-mannoproteins associated with the cell wall. Can process the alpha-mating factor precursor. Required for cell wall integrity. This is Aspartic proteinase 3 (YPS1) from Saccharomyces cerevisiae (strain ATCC 204508 / S288c) (Baker's yeast).